The chain runs to 332 residues: MDPRSEVLLRQPELFQGSLLLVGLPADDLLGKLPNARGWCWHAGDQAALDARFEGRVDFGVEAPEATFEAAVLFLPKARDLTDYLLNALASRLAGRELFLVGEKRGGIEAAAKQLSPFGRARKLDSARHCQLWQVTVENAPQAVTLESLARPYQIELQDGPLTVISLPGVFSHGRLDRGSALLLENIDKLPSGNLLDFGCGAGVLGAAVKRRYPHNDVVMLDVDAFATASSRLTLAANGLEAQVVTGDGIDAAPMGLNTILSNPPFHVGVHTDYMATENLLKKARQHLKSGGELRLVANNFLRYQPLIEEHVGYCHVKAQGNGFKIYSAKRS.

Belongs to the methyltransferase superfamily. RsmC family. As to quaternary structure, monomer.

It localises to the cytoplasm. It carries out the reaction guanosine(1207) in 16S rRNA + S-adenosyl-L-methionine = N(2)-methylguanosine(1207) in 16S rRNA + S-adenosyl-L-homocysteine + H(+). Functionally, specifically methylates the guanine in position 1207 of 16S rRNA in the 30S particle. This Pseudomonas syringae pv. tomato (strain ATCC BAA-871 / DC3000) protein is Ribosomal RNA small subunit methyltransferase C.